The following is a 298-amino-acid chain: N-acetylmuramic acid 6-phosphate etherase (298 aa).

The SIS domain occupies 55-218 (ITESLRRGGR…STASMVRLGK (164 aa)). Catalysis depends on Glu83, which acts as the Proton donor. Residue Glu114 is part of the active site.

Belongs to the GCKR-like family. MurNAc-6-P etherase subfamily. As to quaternary structure, homodimer.

It carries out the reaction N-acetyl-D-muramate 6-phosphate + H2O = N-acetyl-D-glucosamine 6-phosphate + (R)-lactate. The protein operates within amino-sugar metabolism; N-acetylmuramate degradation. Specifically catalyzes the cleavage of the D-lactyl ether substituent of MurNAc 6-phosphate, producing GlcNAc 6-phosphate and D-lactate. This Mycolicibacterium smegmatis (strain ATCC 700084 / mc(2)155) (Mycobacterium smegmatis) protein is N-acetylmuramic acid 6-phosphate etherase.